Reading from the N-terminus, the 141-residue chain is uncharacterized protein (141 aa).

4 consecutive transmembrane segments (helical) span residues Val-7–Leu-27, Ser-47–Val-67, Ala-75–Phe-95, and Val-106–Ala-126.

Its subcellular location is the cell membrane. This is an uncharacterized protein from Bacillus subtilis (strain 168).